The following is a 437-amino-acid chain: ATP-dependent RNA helicase RhlB (437 aa).

The Q motif motif lies at 9 to 37 (QKFADLGLKPQVTEGLEKKGFEYCTPIQA). The 180-residue stretch at 40 to 219 (LPVLLTGQDI…FEHMHNPEHV (180 aa)) folds into the Helicase ATP-binding domain. Residue 53 to 60 (AQTGTGKT) coordinates ATP. Residues 165–168 (DEAD) carry the DEAD box motif. One can recognise a Helicase C-terminal domain in the interval 245-390 (ALLQTLIEEE…VSDYDASALI (146 aa)). Residues 395–437 (APLRMRAPRTQQRRTNTGGTRSGNRKPQGRRPRQPRQSAPKQS) form a disordered region. A compositionally biased stretch (low complexity) spans 403 to 413 (RTQQRRTNTGG). The segment covering 417-428 (GNRKPQGRRPRQ) has biased composition (basic residues).

It belongs to the DEAD box helicase family. RhlB subfamily. As to quaternary structure, component of the RNA degradosome, which is a multiprotein complex involved in RNA processing and mRNA degradation.

It is found in the cytoplasm. It carries out the reaction ATP + H2O = ADP + phosphate + H(+). DEAD-box RNA helicase involved in RNA degradation. Has RNA-dependent ATPase activity and unwinds double-stranded RNA. The polypeptide is ATP-dependent RNA helicase RhlB (Vibrio campbellii (strain ATCC BAA-1116)).